A 304-amino-acid polypeptide reads, in one-letter code: N-acetylmuramic acid 6-phosphate etherase (304 aa).

Phosphoserine is present on S2. The SIS domain maps to 59–222 (AYESFQNGGR…STAVMVKIGK (164 aa)). E87 serves as the catalytic Proton donor. Residue E118 is part of the active site.

The protein belongs to the GCKR-like family. MurNAc-6-P etherase subfamily. Homodimer.

The enzyme catalyses N-acetyl-D-muramate 6-phosphate + H2O = N-acetyl-D-glucosamine 6-phosphate + (R)-lactate. The protein operates within amino-sugar metabolism; N-acetylmuramate degradation. Functionally, specifically catalyzes the cleavage of the D-lactyl ether substituent of MurNAc 6-phosphate, producing GlcNAc 6-phosphate and D-lactate. The protein is N-acetylmuramic acid 6-phosphate etherase of Bacillus subtilis (strain 168).